Reading from the N-terminus, the 472-residue chain is Adenosylhomocysteinase (472 aa).

Substrate is bound by residues threonine 61, aspartate 139, and glutamate 198. Residue 199–201 coordinates NAD(+); that stretch reads TTT. Substrate-binding residues include lysine 228 and aspartate 232. Residues asparagine 233, 262–267, glutamate 285, asparagine 320, 341–343, and asparagine 386 each bind NAD(+); these read GFGDVG and IGH.

This sequence belongs to the adenosylhomocysteinase family. It depends on NAD(+) as a cofactor.

It is found in the cytoplasm. The catalysed reaction is S-adenosyl-L-homocysteine + H2O = L-homocysteine + adenosine. Its pathway is amino-acid biosynthesis; L-homocysteine biosynthesis; L-homocysteine from S-adenosyl-L-homocysteine: step 1/1. In terms of biological role, may play a key role in the regulation of the intracellular concentration of adenosylhomocysteine. In Sphingopyxis alaskensis (strain DSM 13593 / LMG 18877 / RB2256) (Sphingomonas alaskensis), this protein is Adenosylhomocysteinase.